The sequence spans 565 residues: NAD-dependent malic enzyme (565 aa).

Tyr-104 acts as the Proton donor in catalysis. Arg-157 is a binding site for NAD(+). The active-site Proton acceptor is Lys-175. Residues Glu-246, Asp-247, and Asp-270 each contribute to the a divalent metal cation site. NAD(+) is bound by residues Asp-270 and Asn-418.

It belongs to the malic enzymes family. In terms of assembly, homotetramer. Mg(2+) serves as cofactor. The cofactor is Mn(2+).

The catalysed reaction is (S)-malate + NAD(+) = pyruvate + CO2 + NADH. It catalyses the reaction oxaloacetate + H(+) = pyruvate + CO2. This is NAD-dependent malic enzyme from Photorhabdus laumondii subsp. laumondii (strain DSM 15139 / CIP 105565 / TT01) (Photorhabdus luminescens subsp. laumondii).